A 367-amino-acid chain; its full sequence is UDP-N-acetylglucosamine--N-acetylmuramyl-(pentapeptide) pyrophosphoryl-undecaprenol N-acetylglucosamine transferase (367 aa).

Residues 10 to 12 (TGG), Asn124, Ser196, and Gln300 each bind UDP-N-acetyl-alpha-D-glucosamine.

This sequence belongs to the glycosyltransferase 28 family. MurG subfamily.

The protein resides in the cell membrane. It carries out the reaction di-trans,octa-cis-undecaprenyl diphospho-N-acetyl-alpha-D-muramoyl-L-alanyl-D-glutamyl-meso-2,6-diaminopimeloyl-D-alanyl-D-alanine + UDP-N-acetyl-alpha-D-glucosamine = di-trans,octa-cis-undecaprenyl diphospho-[N-acetyl-alpha-D-glucosaminyl-(1-&gt;4)]-N-acetyl-alpha-D-muramoyl-L-alanyl-D-glutamyl-meso-2,6-diaminopimeloyl-D-alanyl-D-alanine + UDP + H(+). The protein operates within cell wall biogenesis; peptidoglycan biosynthesis. Cell wall formation. Catalyzes the transfer of a GlcNAc subunit on undecaprenyl-pyrophosphoryl-MurNAc-pentapeptide (lipid intermediate I) to form undecaprenyl-pyrophosphoryl-MurNAc-(pentapeptide)GlcNAc (lipid intermediate II). In Natranaerobius thermophilus (strain ATCC BAA-1301 / DSM 18059 / JW/NM-WN-LF), this protein is UDP-N-acetylglucosamine--N-acetylmuramyl-(pentapeptide) pyrophosphoryl-undecaprenol N-acetylglucosamine transferase.